We begin with the raw amino-acid sequence, 245 residues long: Superoxide dismutase [Mn], mitochondrial (245 aa).

Residues 1 to 32 (MVNLGSIWQNLLASQAPLQSMTGNATTMAGLA) constitute a mitochondrion transit peptide. The Mn(2+) site is built by H58, H106, D196, and H200.

This sequence belongs to the iron/manganese superoxide dismutase family. As to quaternary structure, homotetramer. Mn(2+) is required as a cofactor.

The protein localises to the mitochondrion matrix. It carries out the reaction 2 superoxide + 2 H(+) = H2O2 + O2. Destroys superoxide anion radicals which are normally produced within the cells and which are toxic to biological systems. This Neurospora crassa (strain ATCC 24698 / 74-OR23-1A / CBS 708.71 / DSM 1257 / FGSC 987) protein is Superoxide dismutase [Mn], mitochondrial (sod-2).